The primary structure comprises 343 residues: NAD-dependent deacetylase sir2E (343 aa).

Residues Tyr-27 to Glu-300 form the Deacetylase sirtuin-type domain. His-152 acts as the Proton acceptor in catalysis. Residues Cys-160, Cys-165, Cys-200, and Cys-203 each contribute to the Zn(2+) site.

This sequence belongs to the sirtuin family.

The protein localises to the nucleus. The catalysed reaction is N(6)-acetyl-L-lysyl-[protein] + NAD(+) + H2O = 2''-O-acetyl-ADP-D-ribose + nicotinamide + L-lysyl-[protein]. In terms of biological role, NAD-dependent deacetylase, which plays an important role in the regulation of transcriptional repression. May play a role in cell cycle. When overexpressed, the cell cycle is accelerated. The protein is NAD-dependent deacetylase sir2E (sir2E) of Dictyostelium discoideum (Social amoeba).